Reading from the N-terminus, the 387-residue chain is Sedoheptulose-1,7-bisphosphatase, chloroplastic (387 aa).

A disulfide bridge connects residues Cys-109 and Cys-114. Mg(2+)-binding residues include Asp-120, Glu-149, Asp-170, Leu-172, and Asp-173. Substrate is bound by residues 173 to 176, Tyr-284, and Lys-314; that span reads DGSS. Glu-320 contributes to the Mg(2+) binding site.

The protein belongs to the FBPase class 1 family. In terms of assembly, homodimer. Mg(2+) is required as a cofactor.

The protein localises to the plastid. Its subcellular location is the chloroplast. It catalyses the reaction D-sedoheptulose 1,7-bisphosphate + H2O = D-sedoheptulose 7-phosphate + phosphate. Its pathway is carbohydrate biosynthesis; Calvin cycle. This Spinacia oleracea (Spinach) protein is Sedoheptulose-1,7-bisphosphatase, chloroplastic.